Here is a 286-residue protein sequence, read N- to C-terminus: Mitochondrial dicarboxylate carrier (286 aa).

3 Solcar repeats span residues 7–87, 100–187, and 196–279; these read SRWY…MRDY, SKVL…AKQL, and DNIF…LRKH. 3 helical membrane-spanning segments follow: residues 9 to 29, 62 to 81, and 102 to 122; these read WYFG…LDLL, GLSA…FAIY, and VLLG…ADLV. At lysine 158 the chain carries N6-acetyllysine. The next 3 membrane-spanning stretches (helical) occupy residues 162 to 181, 202 to 222, and 254 to 274; these read GATM…LSCY, FLSS…LDVL, and GLVP…MFLE.

It belongs to the mitochondrial carrier (TC 2.A.29) family. As to expression, expressed most strongly in liver, then kidney, and at lower levels in heart and brain.

Its subcellular location is the mitochondrion inner membrane. It carries out the reaction (S)-malate(in) + phosphate(out) = (S)-malate(out) + phosphate(in). The catalysed reaction is malonate(out) + (S)-malate(in) = malonate(in) + (S)-malate(out). It catalyses the reaction (S)-malate(in) + succinate(out) = (S)-malate(out) + succinate(in). The enzyme catalyses (S)-malate(in) + sulfate(out) = (S)-malate(out) + sulfate(in). It carries out the reaction malonate(out) + phosphate(in) = malonate(in) + phosphate(out). The catalysed reaction is succinate(out) + phosphate(in) = succinate(in) + phosphate(out). It catalyses the reaction sulfate(out) + phosphate(in) = sulfate(in) + phosphate(out). The enzyme catalyses malonate(out) + succinate(in) = malonate(in) + succinate(out). Catalyzes the electroneutral exchange or flux of physiologically important metabolites such as dicarboxylates (malonate, malate, succinate), inorganic sulfur-containing anions, and phosphate, across mitochondrial inner membrane. Plays an important role in gluconeogenesis, fatty acid metabolism, urea synthesis, and sulfur metabolism, particularly in liver, by supplying the substrates for the different metabolic processes. Regulates fatty acid release from adipocytes, and contributes to systemic insulin sensitivity. The chain is Mitochondrial dicarboxylate carrier from Rattus norvegicus (Rat).